The sequence spans 302 residues: Catechol 1,2-dioxygenase (302 aa).

Residues Y164, Y198, H222, and H224 each coordinate Fe cation.

The protein belongs to the intradiol ring-cleavage dioxygenase family. Fe(3+) is required as a cofactor.

It catalyses the reaction catechol + O2 = cis,cis-muconate + 2 H(+). Its pathway is aromatic compound metabolism; beta-ketoadipate pathway; 5-oxo-4,5-dihydro-2-furylacetate from catechol: step 1/3. This Pseudomonas sp. (strain EST1001) protein is Catechol 1,2-dioxygenase (pheB).